The following is a 473-amino-acid chain: Knob-associated histidine-rich protein (473 aa).

Positions 1–34 (MKSFKNKNTLRRKKAFPVFTKILLVSFLVWVLKC) are cleaved as a signal peptide. Asparagine 42 carries an N-linked (GlcNAc...) asparagine glycan. Residues 57–87 (AQKQHEHHHHHHHQHQHQHQAPHQAHHHHHH) show a composition bias toward basic residues. Disordered stretches follow at residues 57–143 (AQKQ…QVFR) and 347–473 (SSVN…DGSK). The segment covering 95 to 104 (PQVHQQVHGQ) has biased composition (low complexity). The segment covering 108-117 (HHHHHHHHHQ) has biased composition (basic residues). Basic and acidic residues-rich tracts occupy residues 354 to 375 (KHGDEKHHSSKKHEGNDGEGEK) and 396 to 405 (KDNEDAESVK). The span at 406-422 (SKKHKSHDCEKKKSKKH) shows a compositional bias: basic residues. 2 stretches are compositionally biased toward basic and acidic residues: residues 423–444 (KDNEDAESVKSKKSVKEKGEKH) and 453–473 (KTNEENKNKEKTNNLKSDGSK).

It is found in the secreted. Functionally, KAHRP might mimick human histidine-rich glycoproteins to anchor host thrombospondin or a parasite analog in a binding complex with the endothelial cell receptor. This chain is Knob-associated histidine-rich protein, found in Plasmodium falciparum.